A 315-amino-acid chain; its full sequence is Ribonuclease HII (315 aa).

The 190-residue stretch at 78–267 folds into the RNase H type-2 domain; it reads TLVAGVDEAG…VREALGLAPL (190 aa). D84, E85, and D176 together coordinate a divalent metal cation. Positions 273 to 292 are disordered; it reads APPPESAAEPGGEGAIAGIA. Low complexity predominate over residues 278–292; it reads SAAEPGGEGAIAGIA.

Belongs to the RNase HII family. Requires Mn(2+) as cofactor. It depends on Mg(2+) as a cofactor.

The protein resides in the cytoplasm. The enzyme catalyses Endonucleolytic cleavage to 5'-phosphomonoester.. Endonuclease that specifically degrades the RNA of RNA-DNA hybrids. The protein is Ribonuclease HII of Anaeromyxobacter sp. (strain Fw109-5).